The sequence spans 88 residues: Small ribosomal subunit protein uS17 (88 aa).

This sequence belongs to the universal ribosomal protein uS17 family. In terms of assembly, part of the 30S ribosomal subunit.

One of the primary rRNA binding proteins, it binds specifically to the 5'-end of 16S ribosomal RNA. The chain is Small ribosomal subunit protein uS17 from Teredinibacter turnerae (strain ATCC 39867 / T7901).